We begin with the raw amino-acid sequence, 481 residues long: 5-hydroxytryptamine receptor 2B (481 aa).

The Extracellular segment spans residues 1-56 (MALSYRVSELQSTIPEHILQSTFVHVISSNWSGLQTESIPEEMKQIVEEQGNKLHW). N-linked (GlcNAc...) asparagine glycosylation is present at Asn30. The helical transmembrane segment at 57–79 (AALLILMVIIPTIGGNTLVILAV) threads the bilayer. Residues 80–90 (SLEKKLQYATN) are Cytoplasmic-facing. A helical membrane pass occupies residues 91-113 (YFLMSLAVADLLVGLFVMPIALL). Topologically, residues 114–129 (TIMFEAMWPLPLVLCP) are extracellular. Cysteines 128 and 207 form a disulfide. The helical transmembrane segment at 130–151 (AWLFLDVLFSTASIMHLCAISV) threads the bilayer. Ergotamine-binding residues include Asp135 and Thr140. The DRY motif; important for ligand-induced conformation changes signature appears at 152 to 154 (DRY). The Cytoplasmic portion of the chain corresponds to 152–171 (DRYIAIKKPIQANQYNSRAT). The chain crosses the membrane as a helical span at residues 172 to 192 (AFIKITVVWLISIGIAIPVPI). Topologically, residues 193-216 (KGIETDVDNPNNITCVLTKERFGD) are extracellular. Leu209 is an ergotamine binding site. The short motif at 212 to 215 (ERFG) is the [DE]RFG motif; may stabilize a conformation that preferentially activates signaling via beta-arrestin family members element. Residues 217 to 239 (FMLFGSLAAFFTPLAIMIVTYFL) traverse the membrane as a helical segment. Residues 240–324 (TIHALQKKAY…TISNEQRASK (85 aa)) are Cytoplasmic-facing. Residues 325–345 (VLGIVFFLFLLMWCPFFITNI) traverse the membrane as a helical segment. The Extracellular segment spans residues 346–360 (TLVLCDSCNQTTLQM). Cys350 and Cys353 form a disulfide bridge. The helical transmembrane segment at 361 to 382 (LLEIFVWIGYVSSGVNPLVYTL) threads the bilayer. Positions 376 to 380 (NPLVY) match the NPxxY motif; important for ligand-induced conformation changes and signaling motif. Over 383–481 (FNKTFRDAFG…DKTEEQVSYV (99 aa)) the chain is Cytoplasmic. Cys397 carries S-palmitoyl cysteine lipidation. Positions 479 to 481 (SYV) match the PDZ-binding motif.

This sequence belongs to the G-protein coupled receptor 1 family. As to quaternary structure, interacts (via C-terminus) with MPDZ. As to expression, ubiquitous. Detected in liver, kidney, heart, pulmonary artery, and intestine. Detected at lower levels in blood, placenta and brain, especially in cerebellum, occipital cortex and frontal cortex.

It localises to the cell membrane. Its subcellular location is the synapse. The protein resides in the synaptosome. G-protein coupled receptor for 5-hydroxytryptamine (serotonin). Also functions as a receptor for various ergot alkaloid derivatives and psychoactive substances. Ligand binding causes a conformation change that triggers signaling via guanine nucleotide-binding proteins (G proteins) and modulates the activity of downstream effectors. HTR2B is coupled to G(q)/G(11) G alpha proteins and activates phospholipase C-beta, releasing diacylglycerol (DAG) and inositol 1,4,5-trisphosphate (IP3) second messengers that modulate the activity of phosphatidylinositol 3-kinase and promote the release of Ca(2+) ions from intracellular stores, respectively. Beta-arrestin family members inhibit signaling via G proteins and mediate activation of alternative signaling pathways. Plays a role in the regulation of dopamine and 5-hydroxytryptamine release, 5-hydroxytryptamine uptake and in the regulation of extracellular dopamine and 5-hydroxytryptamine levels, and thereby affects neural activity. May play a role in the perception of pain. Plays a role in the regulation of behavior, including impulsive behavior. Required for normal proliferation of embryonic cardiac myocytes and normal heart development. Protects cardiomyocytes against apoptosis. Plays a role in the adaptation of pulmonary arteries to chronic hypoxia. Plays a role in vasoconstriction. Required for normal osteoblast function and proliferation, and for maintaining normal bone density. Required for normal proliferation of the interstitial cells of Cajal in the intestine. The chain is 5-hydroxytryptamine receptor 2B from Homo sapiens (Human).